The primary structure comprises 508 residues: POTE ankyrin domain family member G (508 aa).

ANK repeat units follow at residues 172 to 201 (QKRT…QLNI), 205 to 234 (KKRT…DPNI), 238 to 267 (YGNT…DIES), 271 to 300 (HGLT…NLNA), and 304 to 333 (YGRT…DVSS). The span at 367-376 (KVSSENSNPE) shows a compositional bias: polar residues. The disordered stretch occupies residues 367-488 (KVSSENSNPE…QLSEEQNTGI (122 aa)). 2 stretches are compositionally biased toward basic and acidic residues: residues 377–392 (QDLK…RLKG) and 406–421 (EINK…EMKK). A compositionally biased stretch (polar residues) spans 476-488 (TQKQLSEEQNTGI).

The protein belongs to the POTE family.

This is POTE ankyrin domain family member G (POTEG) from Homo sapiens (Human).